The following is a 79-amino-acid chain: Protein B6 (79 aa).

In Human herpesvirus 6B (strain Z29) (HHV-6 variant B), this protein is Protein B6 (B6).